A 154-amino-acid polypeptide reads, in one-letter code: 6,7-dimethyl-8-ribityllumazine synthase (154 aa).

Residues phenylalanine 22, 56-58 (AFE), and 80-82 (AVI) contribute to the 5-amino-6-(D-ribitylamino)uracil site. 85–86 (AT) is a (2S)-2-hydroxy-3-oxobutyl phosphate binding site. Catalysis depends on histidine 88, which acts as the Proton donor. Phenylalanine 113 lines the 5-amino-6-(D-ribitylamino)uracil pocket. Residue arginine 127 coordinates (2S)-2-hydroxy-3-oxobutyl phosphate.

The protein belongs to the DMRL synthase family.

The enzyme catalyses (2S)-2-hydroxy-3-oxobutyl phosphate + 5-amino-6-(D-ribitylamino)uracil = 6,7-dimethyl-8-(1-D-ribityl)lumazine + phosphate + 2 H2O + H(+). The protein operates within cofactor biosynthesis; riboflavin biosynthesis; riboflavin from 2-hydroxy-3-oxobutyl phosphate and 5-amino-6-(D-ribitylamino)uracil: step 1/2. In terms of biological role, catalyzes the formation of 6,7-dimethyl-8-ribityllumazine by condensation of 5-amino-6-(D-ribitylamino)uracil with 3,4-dihydroxy-2-butanone 4-phosphate. This is the penultimate step in the biosynthesis of riboflavin. This chain is 6,7-dimethyl-8-ribityllumazine synthase, found in Syntrophobacter fumaroxidans (strain DSM 10017 / MPOB).